The sequence spans 463 residues: Thiamine-repressible acid phosphatase SPBC21H7.03c (463 aa).

A signal peptide spans Met-1–Ala-18. His-69 (nucleophile) is an active-site residue. Asn-98, Asn-104, Asn-221, and Asn-324 each carry an N-linked (GlcNAc...) asparagine glycan. The active-site Proton donor is the Asp-341. Asn-439 and Asn-458 each carry an N-linked (GlcNAc...) asparagine glycan.

It belongs to the histidine acid phosphatase family.

Its subcellular location is the secreted. It localises to the cell wall. It carries out the reaction a phosphate monoester + H2O = an alcohol + phosphate. In terms of biological role, may dephosphorylate thiamine phosphates. This is Thiamine-repressible acid phosphatase SPBC21H7.03c from Schizosaccharomyces pombe (strain 972 / ATCC 24843) (Fission yeast).